The chain runs to 260 residues: Thiazole synthase (260 aa).

K100 serves as the catalytic Schiff-base intermediate with DXP. Residues G161, 187 to 188, and 209 to 210 each bind 1-deoxy-D-xylulose 5-phosphate; these read AG and NT.

It belongs to the ThiG family. Homotetramer. Forms heterodimers with either ThiH or ThiS.

Its subcellular location is the cytoplasm. It catalyses the reaction [ThiS sulfur-carrier protein]-C-terminal-Gly-aminoethanethioate + 2-iminoacetate + 1-deoxy-D-xylulose 5-phosphate = [ThiS sulfur-carrier protein]-C-terminal Gly-Gly + 2-[(2R,5Z)-2-carboxy-4-methylthiazol-5(2H)-ylidene]ethyl phosphate + 2 H2O + H(+). It participates in cofactor biosynthesis; thiamine diphosphate biosynthesis. Functionally, catalyzes the rearrangement of 1-deoxy-D-xylulose 5-phosphate (DXP) to produce the thiazole phosphate moiety of thiamine. Sulfur is provided by the thiocarboxylate moiety of the carrier protein ThiS. In vitro, sulfur can be provided by H(2)S. This is Thiazole synthase from Sorangium cellulosum (strain So ce56) (Polyangium cellulosum (strain So ce56)).